A 1136-amino-acid chain; its full sequence is Solute carrier family 12 member 2 (1136 aa).

Disordered regions lie at residues 1-73 and 91-121; these read MSAS…SVSG and PDAA…QQHH. Topologically, residues 1–208 are cytoplasmic; sequence MSASPPISAG…SESKGVVKFG (208 aa). Phosphothreonine occurs at positions 125, 129, 134, 139, and 152. The discontinuously helical transmembrane segment at 209-234 threads the bilayer; that stretch reads WIKGVLVRCMLNIWGVMLFIRMTWIV. Leu-219 contributes to the Na(+) binding site. The K(+) site is built by Asn-220 and Ile-221. Na(+) is bound at residue Trp-222. Chloride contacts are provided by Gly-223, Val-224, and Met-225. Residues 235 to 238 lie on the Extracellular side of the membrane; sequence GQAG. A helical membrane pass occupies residues 239 to 261; it reads IAYSCIIVIMATVVTTITGCSTS. Residues 262–285 are Cytoplasmic-facing; it reads AIATNGFVRGGGAYYLISRSLGPE. A helical transmembrane segment spans residues 286-314; that stretch reads FGGSIGLIFAFANAVAVAMYVVGFAETVV. A chloride-binding site is contributed by Phe-294. Tyr-305 is a binding site for K(+). At 315–327 the chain is on the extracellular side; sequence ELLMDSGLLMIDQ. Helical transmembrane passes span 328 to 351 and 352 to 376; these read TNDI…AGME and WEAK…IGSF. Residues 377–407 lie on the Extracellular side of the membrane; sequence IAVDSKKKFGFFSYDAGILAENFGPDFRGQT. A discontinuously helical membrane pass occupies residues 408 to 427; that stretch reads FFSVFSIFFPAATGILAGAN. Residues Pro-417, Ala-418, and Thr-420 each coordinate K(+). Residues Pro-417 and Ala-418 each contribute to the chloride site. The chloride site is built by Gly-421 and Ile-422. Residues 428–438 are Cytoplasmic-facing; sequence ISGDLADPQMA. A helical transmembrane segment spans residues 439–462; sequence IPKGTLLAILITGLVYVGVAISAG. The Extracellular portion of the chain corresponds to 463–523; it reads ACIVRDATGI…DFQVMSVVSG (61 aa). Asn-475 and Asn-481 each carry an N-linked (GlcNAc...) asparagine glycan. Cysteines 496 and 507 form a disulfide. Residues 524 to 551 traverse the membrane as a helical segment; it reads FSPLISAGIFSATLSSALASLVSAPKVF. Na(+)-binding residues include Ala-535, Ser-538, and Ser-539. The Cytoplasmic portion of the chain corresponds to 552–576; sequence QALCKDNIYPGIAIFGKGYGKNNEP. Transmembrane regions (helical) follow at residues 577-595 and 596-619; these read LRGY…LIAE and LNVI…FSVF. Positions 607 and 611 each coordinate chloride. Residues 620-636 lie on the Cytoplasmic side of the membrane; sequence HASLANSPGWRPSFKYY. 2 consecutive transmembrane segments (helical) span residues 637–656 and 657–672; these read NMWA…FIIN and WWAA…SLYI. At 673–1136 the chain is on the cytoplasmic side; that stretch reads YVSYKKPDVN…NHQSVLTFYS (464 aa). A scissor helix region spans residues 689 to 702; sequence ALTYHQALTHSLQL. The interval 875–921 is disordered; that stretch reads SKDSDGDSSKPSSKATSVQNSPAVQKDEDDDGKAHTQPLLKKDKKSP. The residue at position 1059 (Thr-1059) is a Phosphothreonine.

Belongs to the SLC12A transporter family. As to quaternary structure, homodimer; adopts a domain-swap conformation at the scissor helices connecting the transmembrane domain and C-terminal domain. Post-translationally, phosphorylated at Thr-125, Thr-129 and Thr-134 by OXSR1/OSR1 and STK39/SPAK downstream of WNK kinases (WNK1, WNK2, WNK3 or WNK4), promoting its activity.

It is found in the basolateral cell membrane. The catalysed reaction is K(+)(out) + 2 chloride(out) + Na(+)(out) = K(+)(in) + 2 chloride(in) + Na(+)(in). With respect to regulation, activated following phosphorylation by OXSR1/OSR1 and STK39/SPAK. Inhibited by bumetanide. Its function is as follows. Cation-chloride cotransporter which mediates the electroneutral transport of chloride, potassium and/or sodium ions across the membrane. Plays a vital role in the regulation of ionic balance and cell volume. Important for maintenance of endolymph volume in the otic vesicle, probably by regulating ion homeostasis. Also plays a role in normal development of the swim bladder. This chain is Solute carrier family 12 member 2, found in Danio rerio (Zebrafish).